A 418-amino-acid polypeptide reads, in one-letter code: Light-independent protochlorophyllide reductase subunit N (418 aa).

Residues Cys17, Cys42, and Cys103 each contribute to the [4Fe-4S] cluster site.

The protein belongs to the BchN/ChlN family. Protochlorophyllide reductase is composed of three subunits; ChlL, ChlN and ChlB. Forms a heterotetramer of two ChlB and two ChlN subunits. [4Fe-4S] cluster is required as a cofactor.

It catalyses the reaction chlorophyllide a + oxidized 2[4Fe-4S]-[ferredoxin] + 2 ADP + 2 phosphate = protochlorophyllide a + reduced 2[4Fe-4S]-[ferredoxin] + 2 ATP + 2 H2O. The protein operates within porphyrin-containing compound metabolism; chlorophyll biosynthesis (light-independent). Component of the dark-operative protochlorophyllide reductase (DPOR) that uses Mg-ATP and reduced ferredoxin to reduce ring D of protochlorophyllide (Pchlide) to form chlorophyllide a (Chlide). This reaction is light-independent. The NB-protein (ChlN-ChlB) is the catalytic component of the complex. This Prochlorococcus marinus (strain MIT 9312) protein is Light-independent protochlorophyllide reductase subunit N.